Consider the following 100-residue polypeptide: NAD(P)H-quinone oxidoreductase subunit 4L, chloroplastic (100 aa).

Transmembrane regions (helical) follow at residues 1–21 (MIEN…YGLI), 27–47 (IKVL…LVAF), and 61–81 (FAVF…AIVF).

The protein belongs to the complex I subunit 4L family. As to quaternary structure, NDH is composed of at least 16 different subunits, 5 of which are encoded in the nucleus.

It localises to the plastid. Its subcellular location is the chloroplast thylakoid membrane. The catalysed reaction is a plastoquinone + NADH + (n+1) H(+)(in) = a plastoquinol + NAD(+) + n H(+)(out). It carries out the reaction a plastoquinone + NADPH + (n+1) H(+)(in) = a plastoquinol + NADP(+) + n H(+)(out). Its function is as follows. NDH shuttles electrons from NAD(P)H:plastoquinone, via FMN and iron-sulfur (Fe-S) centers, to quinones in the photosynthetic chain and possibly in a chloroplast respiratory chain. The immediate electron acceptor for the enzyme in this species is believed to be plastoquinone. Couples the redox reaction to proton translocation, and thus conserves the redox energy in a proton gradient. This is NAD(P)H-quinone oxidoreductase subunit 4L, chloroplastic from Chaetosphaeridium globosum (Charophycean green alga).